The sequence spans 107 residues: UPF0145 protein CKO_02237 (107 aa).

This sequence belongs to the UPF0145 family.

This Citrobacter koseri (strain ATCC BAA-895 / CDC 4225-83 / SGSC4696) protein is UPF0145 protein CKO_02237.